Here is a 354-residue protein sequence, read N- to C-terminus: Serine/threonine-protein phosphatase 2A activator 2 (354 aa).

This sequence belongs to the PTPA-type PPIase family.

Its subcellular location is the cytoplasm. It catalyses the reaction [protein]-peptidylproline (omega=180) = [protein]-peptidylproline (omega=0). Its function is as follows. PPIases accelerate the folding of proteins. It catalyzes the cis-trans isomerization of proline imidic peptide bonds in oligopeptides. Acts as a regulatory subunit for PP2A-like phosphatases modulating their activity or substrate specificity, probably by inducing a conformational change in the catalytic subunit, a direct target of the PPIase. Can reactivate inactive phosphatase PP2A-phosphatase methylesterase complexes (PP2Ai) in presence of ATP and Mg(2+) by dissociating the inactive form from the complex. The protein is Serine/threonine-protein phosphatase 2A activator 2 (RRD2) of Yarrowia lipolytica (strain CLIB 122 / E 150) (Yeast).